A 419-amino-acid chain; its full sequence is Tol-Pal system protein TolB (419 aa).

A signal peptide spans 1-17; sequence MRFIGLVLLLLSVKLFG.

The protein belongs to the TolB family. In terms of assembly, the Tol-Pal system is composed of five core proteins: the inner membrane proteins TolA, TolQ and TolR, the periplasmic protein TolB and the outer membrane protein Pal. They form a network linking the inner and outer membranes and the peptidoglycan layer.

Its subcellular location is the periplasm. Part of the Tol-Pal system, which plays a role in outer membrane invagination during cell division and is important for maintaining outer membrane integrity. In Helicobacter hepaticus (strain ATCC 51449 / 3B1), this protein is Tol-Pal system protein TolB.